Here is a 233-residue protein sequence, read N- to C-terminus: Nickel import system ATP-binding protein NikE (233 aa).

The 227-residue stretch at Ile-2–Val-228 folds into the ABC transporter domain. Gly-35–Ser-42 serves as a coordination point for ATP.

It belongs to the ABC transporter superfamily. In terms of assembly, the complex is composed of two ATP-binding proteins (NikD and NikE), two transmembrane proteins (NikB and NikC) and a solute-binding protein (NikA).

It localises to the cell membrane. The catalysed reaction is Ni(2+)(out) + ATP + H2O = Ni(2+)(in) + ADP + phosphate + H(+). Functionally, part of the ABC transporter complex NikABCDE (Opp2) involved in nickel import. Probably responsible for energy coupling to the transport system. In Staphylococcus aureus (strain USA300), this protein is Nickel import system ATP-binding protein NikE.